The sequence spans 235 residues: Ribonuclease 3 (235 aa).

The 126-residue stretch at 6-131 (IDQLKKLTGH…LIAVIYLDGG (126 aa)) folds into the RNase III domain. Residue Glu-44 participates in Mg(2+) binding. Asp-48 is a catalytic residue. Residues Asp-117 and Glu-120 each contribute to the Mg(2+) site. Glu-120 is an active-site residue. The region spanning 156-225 (DAKTELQEWA…AEKILRREGM (70 aa)) is the DRBM domain.

It belongs to the ribonuclease III family. In terms of assembly, homodimer. Mg(2+) serves as cofactor.

It localises to the cytoplasm. It catalyses the reaction Endonucleolytic cleavage to 5'-phosphomonoester.. Digests double-stranded RNA. Involved in the processing of primary rRNA transcript to yield the immediate precursors to the large and small rRNAs (23S and 16S). Processes some mRNAs, and tRNAs when they are encoded in the rRNA operon. Processes pre-crRNA and tracrRNA of type II CRISPR loci if present in the organism. This Bartonella bacilliformis (strain ATCC 35685 / KC583 / Herrer 020/F12,63) protein is Ribonuclease 3.